The primary structure comprises 671 residues: UBA domain-containing protein RUP1 (671 aa).

Residues 1-41 (MMDNQAVKSLLEMGIPHEVAVDALQRTGGNLEAAVNFIFSN) enclose the UBA domain. Position 56 is a phosphoserine (Ser56). A disordered region spans residues 68 to 87 (GTKPCDVPNNGDQDIDMPDV). Residues 432–501 (SKRKQARTRS…LNSARAAKME (70 aa)) adopt a coiled-coil conformation. Residues 643–671 (DGMGDPEQATNNINNGNDNDNDDDIDSDN) form a disordered region. A compositionally biased stretch (acidic residues) spans 661-671 (NDNDDDIDSDN).

In terms of assembly, forms a ternary complex with RSP5 and UBP2.

The protein resides in the cytoplasm. Its subcellular location is the nucleus. In terms of biological role, modulates the activity of the RSP5 HECT ubiquitin-protein ligase through its mediation of the interaction between RSP5 and the deubiquitinase UBP2. Involved in regulation of cell wall homeostasis. The chain is UBA domain-containing protein RUP1 (RUP1) from Saccharomyces cerevisiae (strain ATCC 204508 / S288c) (Baker's yeast).